The chain runs to 472 residues: tRNA-2-methylthio-N(6)-dimethylallyladenosine synthase (472 aa).

Residues 1–24 (MTGTPDVFPPATPGGTPLVALPAG) form a disordered region. Residues 33 to 150 (GKLYIKTHGC…LPELIRARRE (118 aa)) enclose the MTTase N-terminal domain. Cys42, Cys79, Cys113, Cys187, Cys191, and Cys194 together coordinate [4Fe-4S] cluster. Residues 173–407 (RADGASAFVS…RINAHAAGIS (235 aa)) form the Radical SAM core domain. Residues 408 to 471 (EKMVGTVQTV…TNSLRARVVA (64 aa)) enclose the TRAM domain.

Belongs to the methylthiotransferase family. MiaB subfamily. Monomer. It depends on [4Fe-4S] cluster as a cofactor.

It is found in the cytoplasm. The catalysed reaction is N(6)-dimethylallyladenosine(37) in tRNA + (sulfur carrier)-SH + AH2 + 2 S-adenosyl-L-methionine = 2-methylsulfanyl-N(6)-dimethylallyladenosine(37) in tRNA + (sulfur carrier)-H + 5'-deoxyadenosine + L-methionine + A + S-adenosyl-L-homocysteine + 2 H(+). In terms of biological role, catalyzes the methylthiolation of N6-(dimethylallyl)adenosine (i(6)A), leading to the formation of 2-methylthio-N6-(dimethylallyl)adenosine (ms(2)i(6)A) at position 37 in tRNAs that read codons beginning with uridine. The sequence is that of tRNA-2-methylthio-N(6)-dimethylallyladenosine synthase from Stenotrophomonas maltophilia (strain R551-3).